Reading from the N-terminus, the 208-residue chain is Small ribosomal subunit protein uS4 (208 aa).

Residues 31–50 (SALDKRAYGPGQHGQRRTKT) form a disordered region. The S4 RNA-binding domain occupies 98–161 (RRLDNVVYRM…KSNPQVVRAM (64 aa)).

Belongs to the universal ribosomal protein uS4 family. As to quaternary structure, part of the 30S ribosomal subunit. Contacts protein S5. The interaction surface between S4 and S5 is involved in control of translational fidelity.

Its function is as follows. One of the primary rRNA binding proteins, it binds directly to 16S rRNA where it nucleates assembly of the body of the 30S subunit. With S5 and S12 plays an important role in translational accuracy. The protein is Small ribosomal subunit protein uS4 of Helicobacter pylori (strain J99 / ATCC 700824) (Campylobacter pylori J99).